We begin with the raw amino-acid sequence, 466 residues long: 3-isopropylmalate dehydratase large subunit (466 aa).

Residues Cys347, Cys407, and Cys410 each contribute to the [4Fe-4S] cluster site.

It belongs to the aconitase/IPM isomerase family. LeuC type 1 subfamily. Heterodimer of LeuC and LeuD. Requires [4Fe-4S] cluster as cofactor.

It carries out the reaction (2R,3S)-3-isopropylmalate = (2S)-2-isopropylmalate. It functions in the pathway amino-acid biosynthesis; L-leucine biosynthesis; L-leucine from 3-methyl-2-oxobutanoate: step 2/4. Catalyzes the isomerization between 2-isopropylmalate and 3-isopropylmalate, via the formation of 2-isopropylmaleate. The sequence is that of 3-isopropylmalate dehydratase large subunit from Citrobacter koseri (strain ATCC BAA-895 / CDC 4225-83 / SGSC4696).